The following is a 133-amino-acid chain: UPF0102 protein Plav_3586 (133 aa).

This sequence belongs to the UPF0102 family.

This Parvibaculum lavamentivorans (strain DS-1 / DSM 13023 / NCIMB 13966) protein is UPF0102 protein Plav_3586.